We begin with the raw amino-acid sequence, 177 residues long: NADH-quinone oxidoreductase subunit E (177 aa).

[2Fe-2S] cluster-binding residues include Cys-93, Cys-98, Cys-134, and Cys-138.

Belongs to the complex I 24 kDa subunit family. [2Fe-2S] cluster serves as cofactor.

It carries out the reaction a quinone + NADH + 5 H(+)(in) = a quinol + NAD(+) + 4 H(+)(out). NDH-1 shuttles electrons from NADH, via FMN and iron-sulfur (Fe-S) centers, to quinones in the respiratory chain. Couples the redox reaction to proton translocation (for every two electrons transferred, four hydrogen ions are translocated across the cytoplasmic membrane), and thus conserves the redox energy in a proton gradient. This chain is NADH-quinone oxidoreductase subunit E (nuoE), found in Rickettsia prowazekii (strain Madrid E).